The following is a 104-amino-acid chain: SOSS complex subunit C (104 aa).

Residue A2 is modified to N-acetylalanine. At S50 the chain carries Phosphoserine.

Belongs to the SOSS-C family. As to quaternary structure, component of the SOSS complex, composed of SOSS-B (SOSS-B1/NABP2 or SOSS-B2/NABP1), SOSS-A/INTS3 and SOSS-C/INIP. SOSS complexes containing SOSS-B1/NABP2 are more abundant than complexes containing SOSS-B2/NABP1. Interacts with INTS3; the interaction is direct.

The protein localises to the nucleus. Component of the SOSS complex, a multiprotein complex that functions downstream of the MRN complex to promote DNA repair and G2/M checkpoint. The SOSS complex associates with single-stranded DNA at DNA lesions and influences diverse endpoints in the cellular DNA damage response including cell-cycle checkpoint activation, recombinational repair and maintenance of genomic stability. Required for efficient homologous recombination-dependent repair of double-strand breaks (DSBs) and ATM-dependent signaling pathways. This Homo sapiens (Human) protein is SOSS complex subunit C (INIP).